Here is a 186-residue protein sequence, read N- to C-terminus: Elongation factor P (186 aa).

Belongs to the elongation factor P family.

It localises to the cytoplasm. Its pathway is protein biosynthesis; polypeptide chain elongation. Its function is as follows. Involved in peptide bond synthesis. Stimulates efficient translation and peptide-bond synthesis on native or reconstituted 70S ribosomes in vitro. Probably functions indirectly by altering the affinity of the ribosome for aminoacyl-tRNA, thus increasing their reactivity as acceptors for peptidyl transferase. In Prochlorococcus marinus (strain MIT 9215), this protein is Elongation factor P.